Here is a 428-residue protein sequence, read N- to C-terminus: Beta-1,3-galactosyl-O-glycosyl-glycoprotein beta-1,6-N-acetylglucosaminyltransferase (428 aa).

Residues 1–9 (MLRNLFRRR) lie on the Cytoplasmic side of the membrane. A mediates interaction with GOLPH3 and is necessary and sufficient for localization to the Golgi region spans residues 5–9 (LFRRR). The helical; Signal-anchor for type II membrane protein transmembrane segment at 10–32 (LFSCPTKYYFMLLVLSLITFSVL) threads the bilayer. Positions 33–121 (RIHQKPEFFS…EPLTKEEVGF (89 aa)) are stem region. The Lumenal portion of the chain corresponds to 33 to 428 (RIHQKPEFFS…RHKALENLEH (396 aa)). N-linked (GlcNAc...) asparagine glycans are attached at residues Asn-58 and Asn-95. Cystine bridges form between Cys-59-Cys-413, Cys-100-Cys-172, Cys-151-Cys-199, and Cys-372-Cys-381. Residues 122 to 428 (PIAYSIVVHH…RHKALENLEH (307 aa)) form a catalytic region. Residues 128 to 130 (VVH), 155 to 157 (DRK), and Tyr-187 contribute to the UDP-N-acetyl-alpha-D-glucosamine site. 7 residues coordinate a glycoprotein: Glu-243, Asn-250, Lys-251, Arg-254, Glu-320, Lys-341, and Tyr-358. Glu-320 functions as the Nucleophile in the catalytic mechanism. UDP-N-acetyl-alpha-D-glucosamine contacts are provided by Arg-378 and Lys-401.

Belongs to the glycosyltransferase 14 family. In terms of assembly, interacts with GOLPH3; may control GCNT1 retention in the Golgi. N-glycosylated. Expressed in kidney, liver, stomach, spleen, lung and brain.

The protein localises to the golgi apparatus membrane. It carries out the reaction a 3-O-[beta-D-galactosyl-(1-&gt;3)-N-acetyl-alpha-D-galactosaminyl]-L-seryl-[protein] + UDP-N-acetyl-alpha-D-glucosamine = 3-O-{beta-D-galactosyl-(1-&gt;3)-[N-acetyl-beta-D-glucosaminyl-(1-&gt;6)]-N-acetyl-alpha-D-galactosaminyl}-L-seryl-[protein] + UDP + H(+). It catalyses the reaction a 3-O-[beta-D-galactosyl-(1-&gt;3)-N-acetyl-alpha-D-galactosaminyl]-L-threonyl-[protein] + UDP-N-acetyl-alpha-D-glucosamine = a 3-O-{beta-D-galactosyl-(1-&gt;3)-[N-acetyl-beta-D-glucosaminyl-(1-&gt;6)]-N-acetyl-alpha-D-galactosaminyl}-L-threonyl-[protein] + UDP + H(+). The enzyme catalyses a globoside GalGb4Cer + UDP-N-acetyl-alpha-D-glucosamine = a globoside GlcNAc-(beta1-&gt;6)-GalGb4Cer + UDP + H(+). The catalysed reaction is a ganglioside GA1 + UDP-N-acetyl-alpha-D-glucosamine = a ganglioside beta-D-GlcNAc-(1-&gt;6)-GA1 + UDP + H(+). Its pathway is protein modification; protein glycosylation. It participates in glycolipid biosynthesis. With respect to regulation, inactivated by thiol-reactive agents. Inhibited by free UDP. Glycosyltransferase that catalyzes the transfer of an N-acetylglucosamine (GlcNAc) moiety in beta1-6 linkage from UDP-GlcNAc onto mucin-type core 1 O-glycan to form the branched mucin-type core 2 O-glycan. The catalysis is metal ion-independent and occurs with inversion of the anomeric configuration of sugar donor. Selectively involved in synthesis of mucin-type core 2 O-glycans that serve as scaffolds for the display of selectin ligand sialyl Lewis X epitope by myeloid cells, with an impact on homeostasis and recruitment to inflammatory sites. Can also act on glycolipid substrates. Transfers GlcNAc moiety to GalGb4Cer globosides in a reaction step to the synthesis of stage-specific embryonic antigen 1 (SSEA-1) determinant. Can use Galbeta1-3GalNAcalpha1-R and Galbeta1-3GalNAcbeta1-R oligosaccharide derivatives as acceptor substrates. The sequence is that of Beta-1,3-galactosyl-O-glycosyl-glycoprotein beta-1,6-N-acetylglucosaminyltransferase (Gcnt1) from Mus musculus (Mouse).